A 461-amino-acid chain; its full sequence is Bifunctional protein GlmU (461 aa).

The segment at 1-229 (MEKYVVVLAA…FSESLGVNDR (229 aa)) is pyrophosphorylase. Residues 8–11 (LAAG), Lys22, Gln72, and 77–78 (GT) each bind UDP-N-acetyl-alpha-D-glucosamine. Asp102 contributes to the Mg(2+) binding site. Gly139, Glu154, Asn169, and Asn227 together coordinate UDP-N-acetyl-alpha-D-glucosamine. Asn227 lines the Mg(2+) pocket. The segment at 230–250 (IALAEATRIMQRRINEGHMRD) is linker. Residues 251 to 461 (GVTFIDPATA…LPLSEDEEWK (211 aa)) are N-acetyltransferase. Residues Arg332 and Lys350 each contribute to the UDP-N-acetyl-alpha-D-glucosamine site. The active-site Proton acceptor is the His362. Residues Tyr365 and Asn376 each contribute to the UDP-N-acetyl-alpha-D-glucosamine site. Acetyl-CoA is bound by residues Ala422 and Arg439.

It in the N-terminal section; belongs to the N-acetylglucosamine-1-phosphate uridyltransferase family. The protein in the C-terminal section; belongs to the transferase hexapeptide repeat family. In terms of assembly, homotrimer. The cofactor is Mg(2+).

The protein resides in the cytoplasm. The enzyme catalyses alpha-D-glucosamine 1-phosphate + acetyl-CoA = N-acetyl-alpha-D-glucosamine 1-phosphate + CoA + H(+). It carries out the reaction N-acetyl-alpha-D-glucosamine 1-phosphate + UTP + H(+) = UDP-N-acetyl-alpha-D-glucosamine + diphosphate. It participates in nucleotide-sugar biosynthesis; UDP-N-acetyl-alpha-D-glucosamine biosynthesis; N-acetyl-alpha-D-glucosamine 1-phosphate from alpha-D-glucosamine 6-phosphate (route II): step 2/2. Its pathway is nucleotide-sugar biosynthesis; UDP-N-acetyl-alpha-D-glucosamine biosynthesis; UDP-N-acetyl-alpha-D-glucosamine from N-acetyl-alpha-D-glucosamine 1-phosphate: step 1/1. The protein operates within bacterial outer membrane biogenesis; LPS lipid A biosynthesis. Its function is as follows. Catalyzes the last two sequential reactions in the de novo biosynthetic pathway for UDP-N-acetylglucosamine (UDP-GlcNAc). The C-terminal domain catalyzes the transfer of acetyl group from acetyl coenzyme A to glucosamine-1-phosphate (GlcN-1-P) to produce N-acetylglucosamine-1-phosphate (GlcNAc-1-P), which is converted into UDP-GlcNAc by the transfer of uridine 5-monophosphate (from uridine 5-triphosphate), a reaction catalyzed by the N-terminal domain. The sequence is that of Bifunctional protein GlmU from Lactobacillus delbrueckii subsp. bulgaricus (strain ATCC 11842 / DSM 20081 / BCRC 10696 / JCM 1002 / NBRC 13953 / NCIMB 11778 / NCTC 12712 / WDCM 00102 / Lb 14).